The chain runs to 96 residues: Putative defensin-like protein 236 (96 aa).

An N-terminal signal peptide occupies residues 1–23 (MKNATSLIIYCFLMFLLMNNVKG). 4 cysteine pairs are disulfide-bonded: Cys31–Cys93, Cys41–Cys70, Cys49–Cys83, and Cys68–Cys85.

It belongs to the DEFL family.

It localises to the secreted. The chain is Putative defensin-like protein 236 (SCRL20) from Arabidopsis thaliana (Mouse-ear cress).